We begin with the raw amino-acid sequence, 165 residues long: Chorismate pyruvate-lyase (165 aa).

Residues Met35, Arg77, Leu115, and Glu156 each contribute to the substrate site.

It belongs to the UbiC family. As to quaternary structure, monomer.

The protein localises to the cytoplasm. The enzyme catalyses chorismate = 4-hydroxybenzoate + pyruvate. The protein operates within cofactor biosynthesis; ubiquinone biosynthesis. Its function is as follows. Removes the pyruvyl group from chorismate, with concomitant aromatization of the ring, to provide 4-hydroxybenzoate (4HB) for the ubiquinone pathway. This is Chorismate pyruvate-lyase from Escherichia coli O127:H6 (strain E2348/69 / EPEC).